Consider the following 336-residue polypeptide: Ribose-phosphate pyrophosphokinase 1 (336 aa).

Mg(2+)-binding residues include D150, H152, D161, and D165. Residues 236–251 form a binding of phosphoribosylpyrophosphate region; it reads GKVAVMVDDMIDTAGT.

This sequence belongs to the ribose-phosphate pyrophosphokinase family.

It carries out the reaction D-ribose 5-phosphate + ATP = 5-phospho-alpha-D-ribose 1-diphosphate + AMP + H(+). This is Ribose-phosphate pyrophosphokinase 1 (PRS1) from Spinacia oleracea (Spinach).